A 79-amino-acid polypeptide reads, in one-letter code: RNA-binding protein Hfq (79 aa).

The Sm domain maps to 10–70 (DVFLNTVRKQ…ISTIMPGQPV (61 aa)).

Belongs to the Hfq family. As to quaternary structure, homohexamer.

RNA chaperone that binds small regulatory RNA (sRNAs) and mRNAs to facilitate mRNA translational regulation in response to envelope stress, environmental stress and changes in metabolite concentrations. Also binds with high specificity to tRNAs. The chain is RNA-binding protein Hfq from Bartonella quintana (strain Toulouse) (Rochalimaea quintana).